Consider the following 95-residue polypeptide: Putative regulatory protein STH1338 (95 aa).

The protein belongs to the RemA family.

The polypeptide is Putative regulatory protein STH1338 (Symbiobacterium thermophilum (strain DSM 24528 / JCM 14929 / IAM 14863 / T)).